Here is a 478-residue protein sequence, read N- to C-terminus: Cysteine--tRNA ligase (478 aa).

C37 is a Zn(2+) binding site. A 'HIGH' region motif is present at residues 39–49; it reads PTVYHYAHIGN. Positions 224, 249, and 253 each coordinate Zn(2+). Residues 281 to 285 carry the 'KMSKS' region motif; that stretch reads KMSKS. Residue K284 coordinates ATP.

This sequence belongs to the class-I aminoacyl-tRNA synthetase family. In terms of assembly, monomer. Requires Zn(2+) as cofactor.

It is found in the cytoplasm. The enzyme catalyses tRNA(Cys) + L-cysteine + ATP = L-cysteinyl-tRNA(Cys) + AMP + diphosphate. In Protochlamydia amoebophila (strain UWE25), this protein is Cysteine--tRNA ligase.